We begin with the raw amino-acid sequence, 1349 residues long: MTNEKMIFRNRVVDKGQLRNLISWAFTNYGTARTAVMADKLKDLGFRYATKAGVSISVDDLMIPPTKRLLLEAAEEEIRATETRYQRGEITEVERFQKVIDTWNGTSEALKDEVVVHFKKTNPLNSVYMMAFSGARGNISQVRQLVGMRGLMADPQGEIIDLPIKTNFREGLTVTEYIISSYGARKGLVDTALRTADSGYLTRRLVDVSQDVIIREFDCGTTRGLTIGPMTEGAKTLIPLATRLMGRVIGEDVVHPVTKELIAARNSPIPEDLAKKIEKSGVGEVVVRSPLTCEAARSVCQHCYGWSLAHAKMVDLGEAVGIIAAQSIGEPGTQLTMRTFHTGGVFTGEVAQQVRSKIDGTVKLPRKLKTRTYRTRHGEDALYVEANGIMLLEPTKVGDVTPENQEVHLTQGSTLYVFDGNKVKQGQLLAEVALGGRTTRTNTEKAVKDVASDLAGEVQFAEVVPEQKTDRQGNTTTTAARGGLIWILSGEVYNLPPGAELVVKNGDAIAANGVLAETKLASLHGGVVRLPEATPGKSTREIEIITASVVLDQATVTVQSSQGRNNYLVSTGNNQVFNLRATPGTKVQNGQVVAELIDDRYRTTTGGFLKFAGVEVQKKGKAKLGYEVVQGGTLLWIPEESHEVNKDISLLLVEDGQFVEAGTEVVKDIFCQNSGVVEVTQKNDILREVVVKPGELLMVDDPESVIGRDNTFIQPGEEFQGNVATELRYIQYVETPEGPALLSRPVVEFAVPDNPDVPSTTSVSQQTGRSIQLRAVQRLPYKDSERVKSVEGVELLRTQLVLEIEQEGEQDHNASPLAADIELVEDTENPEVQRLQLVILESLVIRRDITADATQGSTQTTLEVYDGLTIAPGSVVARTQILCKEGGEVRGVRKGTENVRRCLVLRDVDRLTINTSTQPKVKVGDLLVEGTEVAPGVFAPESGQVVDIKNAAAASGGESALSTKNYVITTRIGRPYRVSPGAVLQIEDGDLVQRGDNLVLLVFERAKTGDIIQGLPRIEELLEARKPKEACILCRRGGEVKVVYAESGDEAIAIKVVESNGVVTDYPLGPGQNLIVPDGSIVLAGQPLTDGPSNPHEILEIFFSLGSEDGIYACASLALQKVQTFLVNEVQMVYQSQGIDISDKHIEVIVRQMTNKVRIDDGGDTTMLPGELVELRQVEQVNEAMAITGGARAQYTPVLLGITKASLNTDSFISAASFQETTRVLTEAAIEGKSDWLRGLKENVIIGRLIPAGTGYNTYEEPGAIDDYAAEISSSVLDEVDDPLDMVLDDRTARTYNLDSPTLGESGFGSRRAERSVLDDEDELIADEVVDDDDFEEEEEDDEDDFDDE.

Cys-219, Cys-293, Cys-300, and Cys-303 together coordinate Zn(2+). The interval 1298–1349 (LDSPTLGESGFGSRRAERSVLDDEDELIADEVVDDDDFEEEEEDDEDDFDDE) is disordered. Over residues 1319 to 1349 (DDEDELIADEVVDDDDFEEEEEDDEDDFDDE) the composition is skewed to acidic residues.

It belongs to the RNA polymerase beta' chain family. RpoC2 subfamily. In cyanobacteria the RNAP catalytic core is composed of 2 alpha, 1 beta, 1 beta', 1 gamma and 1 omega subunit. When a sigma factor is associated with the core the holoenzyme is formed, which can initiate transcription. Zn(2+) is required as a cofactor.

The catalysed reaction is RNA(n) + a ribonucleoside 5'-triphosphate = RNA(n+1) + diphosphate. DNA-dependent RNA polymerase catalyzes the transcription of DNA into RNA using the four ribonucleoside triphosphates as substrates. The sequence is that of DNA-directed RNA polymerase subunit beta' from Nostoc punctiforme (strain ATCC 29133 / PCC 73102).